The sequence spans 372 residues: Glutamate 5-kinase (372 aa).

Residue lysine 14 participates in ATP binding. Serine 54, aspartate 141, and asparagine 153 together coordinate substrate. Threonine 173–aspartate 174 contacts ATP. A PUA domain is found at arginine 280 to methionine 358.

It belongs to the glutamate 5-kinase family.

The protein localises to the cytoplasm. It catalyses the reaction L-glutamate + ATP = L-glutamyl 5-phosphate + ADP. The protein operates within amino-acid biosynthesis; L-proline biosynthesis; L-glutamate 5-semialdehyde from L-glutamate: step 1/2. Its function is as follows. Catalyzes the transfer of a phosphate group to glutamate to form L-glutamate 5-phosphate. This is Glutamate 5-kinase from Pseudomonas syringae pv. syringae (strain B728a).